Consider the following 319-residue polypeptide: Ferrochelatase (319 aa).

His-194 and Glu-275 together coordinate Fe cation.

Belongs to the ferrochelatase family.

Its subcellular location is the cytoplasm. The enzyme catalyses heme b + 2 H(+) = protoporphyrin IX + Fe(2+). Its pathway is porphyrin-containing compound metabolism; protoheme biosynthesis; protoheme from protoporphyrin-IX: step 1/1. Functionally, catalyzes the ferrous insertion into protoporphyrin IX. This is Ferrochelatase from Hamiltonella defensa subsp. Acyrthosiphon pisum (strain 5AT).